Reading from the N-terminus, the 227-residue chain is Cytochrome c oxidase subunit 2 (227 aa).

At 1–14 (MAYPFQLGLQDASS) the chain is on the mitochondrial intermembrane side. A helical transmembrane segment spans residues 15–45 (PIMEELMNFHDHTLMIVFLISSLVLYLMALM). Over 46–59 (LSTKLIHTSTMDAQ) the chain is Mitochondrial matrix. The helical transmembrane segment at 60–87 (EVETIWTILPAIILIMIALPSLRILYMM) threads the bilayer. Residues 88–227 (DEINNPILTV…LFENWSMSMT (140 aa)) lie on the Mitochondrial intermembrane side of the membrane. Positions 161, 196, 198, 200, 204, and 207 each coordinate Cu cation. Glu-198 is a Mg(2+) binding site.

Belongs to the cytochrome c oxidase subunit 2 family. In terms of assembly, component of the cytochrome c oxidase (complex IV, CIV), a multisubunit enzyme composed of 14 subunits. The complex is composed of a catalytic core of 3 subunits MT-CO1, MT-CO2 and MT-CO3, encoded in the mitochondrial DNA, and 11 supernumerary subunits COX4I, COX5A, COX5B, COX6A, COX6B, COX6C, COX7A, COX7B, COX7C, COX8 and NDUFA4, which are encoded in the nuclear genome. The complex exists as a monomer or a dimer and forms supercomplexes (SCs) in the inner mitochondrial membrane with NADH-ubiquinone oxidoreductase (complex I, CI) and ubiquinol-cytochrome c oxidoreductase (cytochrome b-c1 complex, complex III, CIII), resulting in different assemblies (supercomplex SCI(1)III(2)IV(1) and megacomplex MCI(2)III(2)IV(2)). Found in a complex with TMEM177, COA6, COX18, COX20, SCO1 and SCO2. Interacts with TMEM177 in a COX20-dependent manner. Interacts with COX20. Interacts with COX16. Requires Cu cation as cofactor.

It localises to the mitochondrion inner membrane. The catalysed reaction is 4 Fe(II)-[cytochrome c] + O2 + 8 H(+)(in) = 4 Fe(III)-[cytochrome c] + 2 H2O + 4 H(+)(out). Component of the cytochrome c oxidase, the last enzyme in the mitochondrial electron transport chain which drives oxidative phosphorylation. The respiratory chain contains 3 multisubunit complexes succinate dehydrogenase (complex II, CII), ubiquinol-cytochrome c oxidoreductase (cytochrome b-c1 complex, complex III, CIII) and cytochrome c oxidase (complex IV, CIV), that cooperate to transfer electrons derived from NADH and succinate to molecular oxygen, creating an electrochemical gradient over the inner membrane that drives transmembrane transport and the ATP synthase. Cytochrome c oxidase is the component of the respiratory chain that catalyzes the reduction of oxygen to water. Electrons originating from reduced cytochrome c in the intermembrane space (IMS) are transferred via the dinuclear copper A center (CU(A)) of subunit 2 and heme A of subunit 1 to the active site in subunit 1, a binuclear center (BNC) formed by heme A3 and copper B (CU(B)). The BNC reduces molecular oxygen to 2 water molecules using 4 electrons from cytochrome c in the IMS and 4 protons from the mitochondrial matrix. This chain is Cytochrome c oxidase subunit 2 (MT-CO2), found in Gerbillus gerbillus (Lesser Egyptian gerbil).